A 175-amino-acid polypeptide reads, in one-letter code: MKRDRSDYEESMKHIDIVESLMMLSRSFVVKQIDVKQSTGSKTNHNNHFECKTCNRKFDSFQALGGHRASHKKPKLIVDQEQVKHRNKENDMHKCTICDQMFGTGQALGGHMRKHRTSMITEQSIVPSVVYSRPVFNRCSSSKEILDLNLTPLENDLVLIFGKNLVPQIDLKFVN.

2 C2H2-type zinc fingers span residues 49 to 71 (FECKTCNRKFDSFQALGGHRASH) and 93 to 115 (HKCTICDQMFGTGQALGGHMRKH). The Nuclear localization signal motif lies at 71–78 (HKKPKLIV). The EAR-like (transcriptional repression) signature appears at 146–152 (LDLNLTP).

As to expression, mostly expressed in stems, siliques and leaves, and, to a lower extent, in cotyledons, hypocotyls and roots.

It is found in the nucleus. Its function is as follows. Transcription factor involved in stress responses. Positive regulator of the jasmonic acid (JA)- mediated signaling pathway. Triggers the up-regulation of LOX3, VSP2, PAL1 and PAL2 in a JA-dependent manner. Promotes drought and osmotic stress tolerance by preventing reactive oxygen species (ROS) production (e.g. H(2)O(2)). This is Zinc finger protein ZAT18 from Arabidopsis thaliana (Mouse-ear cress).